We begin with the raw amino-acid sequence, 495 residues long: UDP-N-acetylmuramoyl-L-alanyl-D-glutamate--2,6-diaminopimelate ligase (495 aa).

Residues leucine 27, serine 29, and 44 to 46 (HQA) each bind UDP-N-acetyl-alpha-D-muramoyl-L-alanyl-D-glutamate. An ATP-binding site is contributed by 116–122 (GTNGKTT). Residues asparagine 157, 158 to 159 (TT), serine 185, glutamine 191, and arginine 193 each bind UDP-N-acetyl-alpha-D-muramoyl-L-alanyl-D-glutamate. Lysine 225 carries the post-translational modification N6-carboxylysine. Residues arginine 390, 414-417 (DNPR), glycine 465, and glutamate 469 contribute to the meso-2,6-diaminopimelate site. The Meso-diaminopimelate recognition motif signature appears at 414–417 (DNPR).

Belongs to the MurCDEF family. MurE subfamily. The cofactor is Mg(2+). Carboxylation is probably crucial for Mg(2+) binding and, consequently, for the gamma-phosphate positioning of ATP.

It localises to the cytoplasm. It catalyses the reaction UDP-N-acetyl-alpha-D-muramoyl-L-alanyl-D-glutamate + meso-2,6-diaminopimelate + ATP = UDP-N-acetyl-alpha-D-muramoyl-L-alanyl-gamma-D-glutamyl-meso-2,6-diaminopimelate + ADP + phosphate + H(+). The protein operates within cell wall biogenesis; peptidoglycan biosynthesis. Its function is as follows. Catalyzes the addition of meso-diaminopimelic acid to the nucleotide precursor UDP-N-acetylmuramoyl-L-alanyl-D-glutamate (UMAG) in the biosynthesis of bacterial cell-wall peptidoglycan. This chain is UDP-N-acetylmuramoyl-L-alanyl-D-glutamate--2,6-diaminopimelate ligase, found in Shigella flexneri.